The sequence spans 221 residues: UPF0758 protein ECA0145 (221 aa).

Residues 99-221 form the MPN domain; the sequence is AMLNPEATGQ…FVSFAERGWI (123 aa). His170, His172, and Asp183 together coordinate Zn(2+). Positions 170–183 match the JAMM motif motif; it reads HNHPSGKAEPSQAD.

This sequence belongs to the UPF0758 family. YicR subfamily.

The sequence is that of UPF0758 protein ECA0145 from Pectobacterium atrosepticum (strain SCRI 1043 / ATCC BAA-672) (Erwinia carotovora subsp. atroseptica).